The sequence spans 394 residues: Elongation factor Tu (394 aa).

A tr-type G domain is found at 10–204; sequence KPHVNIGTIG…AVDSWIPLPE (195 aa). The tract at residues 19-26 is G1; the sequence is GHVDHGKT. 19–26 lines the GTP pocket; it reads GHVDHGKT. Thr-26 contacts Mg(2+). Residues 60–64 form a G2 region; the sequence is GITIN. The interval 81–84 is G3; sequence DCPG. GTP is bound by residues 81 to 85 and 136 to 139; these read DCPGH and NKCD. The interval 136–139 is G4; sequence NKCD. The tract at residues 174–176 is G5; sequence SGL.

The protein belongs to the TRAFAC class translation factor GTPase superfamily. Classic translation factor GTPase family. EF-Tu/EF-1A subfamily. In terms of assembly, monomer.

The protein localises to the cytoplasm. It catalyses the reaction GTP + H2O = GDP + phosphate + H(+). In terms of biological role, GTP hydrolase that promotes the GTP-dependent binding of aminoacyl-tRNA to the A-site of ribosomes during protein biosynthesis. This is Elongation factor Tu from Ureaplasma urealyticum serovar 10 (strain ATCC 33699 / Western).